A 435-amino-acid chain; its full sequence is Adenylosuccinate synthetase (435 aa).

GTP-binding positions include 12-18 (GDEGKGK) and 40-42 (GHT). Asp13 functions as the Proton acceptor in the catalytic mechanism. 2 residues coordinate Mg(2+): Asp13 and Gly40. Residues 13–16 (DEGK), 38–41 (NAGH), Thr130, Arg144, Gln224, Thr239, and Arg301 contribute to the IMP site. The Proton donor role is filled by His41. 297–303 (TVSNRKR) is a substrate binding site. GTP-binding positions include Arg303, 329–331 (KLD), and 411–413 (SAG).

The protein belongs to the adenylosuccinate synthetase family. Homodimer. Mg(2+) serves as cofactor.

The protein resides in the cytoplasm. It carries out the reaction IMP + L-aspartate + GTP = N(6)-(1,2-dicarboxyethyl)-AMP + GDP + phosphate + 2 H(+). It functions in the pathway purine metabolism; AMP biosynthesis via de novo pathway; AMP from IMP: step 1/2. Its function is as follows. Plays an important role in the de novo pathway of purine nucleotide biosynthesis. Catalyzes the first committed step in the biosynthesis of AMP from IMP. The sequence is that of Adenylosuccinate synthetase from Wolbachia sp. subsp. Brugia malayi (strain TRS).